The following is a 296-amino-acid chain: Tyrosine recombinase XerC (296 aa).

Residues 1-84 (MEKIQQAYLY…TLRSFYEYWM (84 aa)) form the Core-binding (CB) domain. The region spanning 105 to 286 (YLPHFFYEEE…TNEQLRKVYL (182 aa)) is the Tyr recombinase domain. Residues arginine 145, lysine 169, histidine 238, arginine 241, and histidine 264 contribute to the active site. Tyrosine 273 (O-(3'-phospho-DNA)-tyrosine intermediate) is an active-site residue.

Belongs to the 'phage' integrase family. XerC subfamily. Forms a cyclic heterotetrameric complex composed of two molecules of XerC and two molecules of XerD.

Its subcellular location is the cytoplasm. Site-specific tyrosine recombinase, which acts by catalyzing the cutting and rejoining of the recombining DNA molecules. The XerC-XerD complex is essential to convert dimers of the bacterial chromosome into monomers to permit their segregation at cell division. It also contributes to the segregational stability of plasmids. The sequence is that of Tyrosine recombinase XerC from Staphylococcus saprophyticus subsp. saprophyticus (strain ATCC 15305 / DSM 20229 / NCIMB 8711 / NCTC 7292 / S-41).